We begin with the raw amino-acid sequence, 337 residues long: 3-isopropylmalate dehydrogenase (337 aa).

Substrate contacts are provided by R88, R98, R122, and D212. Mg(2+)-binding residues include D212, D236, and D240. 272 to 284 (GSAPDIAGKGIAD) serves as a coordination point for NAD(+).

The protein belongs to the isocitrate and isopropylmalate dehydrogenases family. LeuB type 2 subfamily. Homodimer. Requires Mg(2+) as cofactor. The cofactor is Mn(2+).

The protein localises to the cytoplasm. The catalysed reaction is (2R,3S)-3-isopropylmalate + NAD(+) = 4-methyl-2-oxopentanoate + CO2 + NADH. The protein operates within amino-acid biosynthesis; L-leucine biosynthesis; L-leucine from 3-methyl-2-oxobutanoate: step 3/4. In terms of biological role, catalyzes the oxidation of 3-carboxy-2-hydroxy-4-methylpentanoate (3-isopropylmalate) to 3-carboxy-4-methyl-2-oxopentanoate. The product decarboxylates to 4-methyl-2 oxopentanoate. The sequence is that of 3-isopropylmalate dehydrogenase from Rhodococcus erythropolis (strain PR4 / NBRC 100887).